Consider the following 89-residue polypeptide: Small ribosomal subunit protein uS15 (89 aa).

The span at 1–13 (MYLTSEKKEEIFS) shows a compositional bias: basic and acidic residues. Residues 1–24 (MYLTSEKKEEIFSKHGKGKNDTGS) form a disordered region.

This sequence belongs to the universal ribosomal protein uS15 family. As to quaternary structure, part of the 30S ribosomal subunit. Forms a bridge to the 50S subunit in the 70S ribosome, contacting the 23S rRNA.

Its function is as follows. One of the primary rRNA binding proteins, it binds directly to 16S rRNA where it helps nucleate assembly of the platform of the 30S subunit by binding and bridging several RNA helices of the 16S rRNA. Functionally, forms an intersubunit bridge (bridge B4) with the 23S rRNA of the 50S subunit in the ribosome. This Christiangramia forsetii (strain DSM 17595 / CGMCC 1.15422 / KT0803) (Gramella forsetii) protein is Small ribosomal subunit protein uS15.